The chain runs to 75 residues: uncharacterized protein (75 aa).

A helical membrane pass occupies residues 12-32 (LKVFILFTGFTALFYYAMIWV).

The protein resides in the cell membrane. This is an uncharacterized protein from Bacillus subtilis (strain 168).